The primary structure comprises 229 residues: uncharacterized protein (229 aa).

Positions 1-102 (MKLLGRKKSY…AASKAQITDR (102 aa)) are disordered. The span at 73-94 (ARRKSLAPPKCHRAERRAKRAA) shows a compositional bias: basic residues. Transmembrane regions (helical) follow at residues 137 to 157 (LGLF…VPQL) and 159 to 179 (LYMS…GIIL).

Its subcellular location is the cell membrane. This is an uncharacterized protein from Mycobacterium leprae (strain TN).